A 200-amino-acid chain; its full sequence is Putative 3-methyladenine DNA glycosylase (200 aa).

This sequence belongs to the DNA glycosylase MPG family.

In Shouchella clausii (strain KSM-K16) (Alkalihalobacillus clausii), this protein is Putative 3-methyladenine DNA glycosylase.